The primary structure comprises 328 residues: Type II secretion system protein K (328 aa).

A propeptide spans 1 to 7 (leader sequence); the sequence is MRSRQRG. A helical membrane pass occupies residues 8 to 28; that stretch reads AALLVVLLILALMVTIAAVIT. At 29-328 the chain is on the periplasmic side; it reads ERTGKAFLRT…QYGGYRTVNP (300 aa).

It belongs to the GSP K family. In terms of assembly, type II secretion is composed of four main components: the outer membrane complex, the inner membrane complex, the cytoplasmic secretion ATPase and the periplasm-spanning pseudopilus. Interacts with core component OutG. Cleaved by prepilin peptidase.

It localises to the cell inner membrane. Component of the type II secretion system required for the energy-dependent secretion of extracellular factors such as proteases and toxins from the periplasm. Plays a role in pseudopilus assembly and seems to control its length. Interacts with the pseudopilus tip complex that is critical for the recognition and binding of secretion substrates. This is Type II secretion system protein K (outK) from Pectobacterium carotovorum subsp. carotovorum (Erwinia carotovora subsp. carotovora).